Consider the following 503-residue polypeptide: Arabinose import ATP-binding protein AraG (503 aa).

2 ABC transporter domains span residues Leu-5–Arg-240 and Leu-253–Gly-497. Gly-37–Ser-44 lines the ATP pocket.

It belongs to the ABC transporter superfamily. Arabinose importer (TC 3.A.1.2.2) family. As to quaternary structure, the complex is composed of two ATP-binding proteins (AraG), two transmembrane proteins (AraH) and a solute-binding protein (AraF).

The protein localises to the cell inner membrane. It catalyses the reaction L-arabinose(out) + ATP + H2O = L-arabinose(in) + ADP + phosphate + H(+). In terms of biological role, part of the ABC transporter complex AraFGH involved in arabinose import. Responsible for energy coupling to the transport system. This Burkholderia pseudomallei (strain 1710b) protein is Arabinose import ATP-binding protein AraG.